Reading from the N-terminus, the 316-residue chain is tRNA dimethylallyltransferase (316 aa).

Residue 17 to 24 (GPTASGKT) coordinates ATP. Residue 19-24 (TASGKT) coordinates substrate. Interaction with substrate tRNA stretches follow at residues 42 to 45 (DSAL), 166 to 170 (QRLSR), 247 to 252 (RCVGYR), and 280 to 287 (KRQITWLR).

This sequence belongs to the IPP transferase family. As to quaternary structure, monomer. Mg(2+) is required as a cofactor.

It carries out the reaction adenosine(37) in tRNA + dimethylallyl diphosphate = N(6)-dimethylallyladenosine(37) in tRNA + diphosphate. Its function is as follows. Catalyzes the transfer of a dimethylallyl group onto the adenine at position 37 in tRNAs that read codons beginning with uridine, leading to the formation of N6-(dimethylallyl)adenosine (i(6)A). This is tRNA dimethylallyltransferase from Shigella dysenteriae serotype 1 (strain Sd197).